Reading from the N-terminus, the 133-residue chain is Small ribosomal subunit protein uS9 (133 aa).

Positions 114 to 133 are disordered; that stretch reads VERKKYGKKKARRSPQFSKR. The segment covering 118-133 has biased composition (basic residues); sequence KYGKKKARRSPQFSKR.

The protein belongs to the universal ribosomal protein uS9 family.

The chain is Small ribosomal subunit protein uS9 from Fusobacterium nucleatum subsp. nucleatum (strain ATCC 25586 / DSM 15643 / BCRC 10681 / CIP 101130 / JCM 8532 / KCTC 2640 / LMG 13131 / VPI 4355).